We begin with the raw amino-acid sequence, 675 residues long: Protein PALS1 (675 aa).

A disordered region spans residues 1 to 78 (MTTSHMNGHV…RREEEGKKQE (78 aa)). The tract at residues 1–345 (MTTSHMNGHV…QQIKPPPAKE (345 aa)) is required for the correct localization of PALS1 and PATJ at cell-cell contacts and the normal formation of tight junctions and adherens junctions. 2 stretches are compositionally biased toward basic and acidic residues: residues 10–36 (VTEESDNEVKNVDLASPEEHQKHREMA) and 54–78 (AQLERIRQQQEDMRRRREEEGKKQE). Phosphoserine occurs at positions 14 and 25. The interaction with PARD6B stretch occupies residues 21 to 140 (VDLASPEEHQ…LKHIQHTLVD (120 aa)). Residues S83 and S84 each carry the phosphoserine modification. L27 domains follow at residues 120–177 (KILE…NKAS) and 179–235 (PFPL…MQLE). The interaction with LIN7C stretch occupies residues 181-243 (PLISNAQDLA…LEPFTDERVY (63 aa)). The 81-residue stretch at 256-336 (IVRIEKARDI…TLTFVLIPSQ (81 aa)) folds into the PDZ domain. The region spanning 345–417 (ETVIHVKAHF…PGKSFQQQRE (73 aa)) is the SH3 domain. The Guanylate kinase-like domain occupies 479–660 (KRPIILIGPQ…AYQELLRLIN (182 aa)). Residue 486 to 493 (GPQNCGQN) participates in ATP binding.

Belongs to the MAGUK family. In terms of assembly, heterodimer with MPP1. Forms a heterotrimeric complex composed of PALS1, LIN7B and PATJ; the N-terminal L27 domain of PALS1 interacts with the L27 domain of PATJ and the C-terminal L27 domain of PALS1 interacts with the L27 domain of LIN7B. Component of a complex composed of PALS1, CRB1 and MPP4. Component of a complex whose core is composed of ARHGAP17, AMOT, PALS1, PATJ and PARD3/PAR3. Component of a complex composed of PALS1, CRB1 and EPB41L5. Within the complex, interacts (via HOOK domain) with EPB41L5 (via FERM domain), and interacts with CRB1 (via intracellular domain). Component of a complex composed of PALS1, MPP3 and CRB1; PALS1 acts as a bridging protein between MPP3 (via guanylate kinase-like domain) and CRB1. Component of a complex composed of CRB3, PALS1 and PATJ. As part of the Crumbs complex; interacts with WWP1, the interaction is enhanced by AMOTL2 and facilitates WWP1 localization to the plasma membrane. The Crumbs complex promotes monoubiquitination of AMOTL2 by WWP1, which activates the Hippo signaling pathway. Interacts (via PDZ domain) with PATJ (via N-terminus). Interacts with EZR. Interacts (via PDZ domain) with CRB1 (via C-terminal ERLI motif). While the PDZ domain is sufficient for interaction with CRB1, the adjacent SH3 and guanylate kinase-like domains are likely to contribute to a high affinity interaction. Interacts with WWTR1/TAZ (via WW domain). Interacts with MPP7. Interacts (via PDZ domain) with CRB3 (via C-terminus). Interacts with LIN7C. Interacts with MPDZ. Interacts with PARD6B. Interacts with SC6A1. Interacts with CDH5; the interaction promotes PALS1 localization to cell junctions and is required for CDH5-mediated vascular lumen formation and endothelial cell. Interacts with NPHP1 (via coiled coil and SH3 domains). Interacts with NPHP4. Interacts with CRB2.

Its subcellular location is the golgi apparatus. It localises to the cell membrane. The protein localises to the endomembrane system. It is found in the cell junction. The protein resides in the tight junction. Its subcellular location is the adherens junction. It localises to the cell projection. The protein localises to the axon. It is found in the perikaryon. The protein resides in the apical cell membrane. In terms of biological role, plays a role in tight junction biogenesis and in the establishment of cell polarity in epithelial cells. Also involved in adherens junction biogenesis by ensuring correct localization of the exocyst complex protein EXOC4/SEC8 which allows trafficking of adherens junction structural component CDH1 to the cell surface. Plays a role through its interaction with CDH5 in vascular lumen formation and endothelial membrane polarity. Required during embryonic and postnatal retinal development. Required for the maintenance of cerebellar progenitor cells in an undifferentiated proliferative state, preventing premature differentiation, and is required for cerebellar histogenesis, fissure formation, cerebellar layer organization and cortical development. Plays a role in neuronal progenitor cell survival, potentially via promotion of mTOR signaling. Plays a role in the radial and longitudinal extension of the myelin sheath in Schwann cells. May modulate SC6A1/GAT1-mediated GABA uptake by stabilizing the transporter. May play a role in the T-cell receptor-mediated activation of NF-kappa-B. Required for localization of EZR to the apical membrane of parietal cells and may play a role in the dynamic remodeling of the apical cytoskeleton. Required for the normal polarized localization of the vesicular marker STX4. Required for the correct trafficking of the myelin proteins PMP22 and MAG. Involved in promoting phosphorylation and cytoplasmic retention of transcriptional coactivators YAP1 and WWTR1/TAZ which leads to suppression of TGFB1-dependent transcription of target genes such as CCN2/CTGF, SERPINE1/PAI1, SNAI1/SNAIL1 and SMAD7. This is Protein PALS1 from Canis lupus familiaris (Dog).